A 328-amino-acid chain; its full sequence is Ferredoxin--NADP reductase 2 (328 aa).

Threonine 16, glutamate 35, glutamine 43, tyrosine 48, isoleucine 88, phenylalanine 123, aspartate 284, and threonine 325 together coordinate FAD.

It belongs to the ferredoxin--NADP reductase type 2 family. Homodimer. Requires FAD as cofactor.

The catalysed reaction is 2 reduced [2Fe-2S]-[ferredoxin] + NADP(+) + H(+) = 2 oxidized [2Fe-2S]-[ferredoxin] + NADPH. In Oceanobacillus iheyensis (strain DSM 14371 / CIP 107618 / JCM 11309 / KCTC 3954 / HTE831), this protein is Ferredoxin--NADP reductase 2.